The chain runs to 314 residues: Protoheme IX farnesyltransferase (314 aa).

8 helical membrane passes run 36-56, 65-85, 114-134, 135-155, 179-199, 237-257, 259-279, and 290-310; these read IGIVNSNLITTIAGFLLAISF, WGTFLLTIIGTALVIAGGCIV, SVLTFGLLTTAVGLLLLMFTS, WYATLFAFIGWFGYVVLYTIW, WAAISPSFHIVPFVMFLIMFI, IIVYIACLLPLPFFLLPTMGI, FAVIATLLNLGWLAIAFTGLF, and IFIFSLNYLIILFPLMIIVKL.

Belongs to the UbiA prenyltransferase family. Protoheme IX farnesyltransferase subfamily. In terms of assembly, interacts with CtaA.

Its subcellular location is the cell membrane. The enzyme catalyses heme b + (2E,6E)-farnesyl diphosphate + H2O = Fe(II)-heme o + diphosphate. Its pathway is porphyrin-containing compound metabolism; heme O biosynthesis; heme O from protoheme: step 1/1. In terms of biological role, converts heme B (protoheme IX) to heme O by substitution of the vinyl group on carbon 2 of heme B porphyrin ring with a hydroxyethyl farnesyl side group. The polypeptide is Protoheme IX farnesyltransferase (Oceanobacillus iheyensis (strain DSM 14371 / CIP 107618 / JCM 11309 / KCTC 3954 / HTE831)).